Consider the following 337-residue polypeptide: Phosphate acyltransferase (337 aa).

The protein belongs to the PlsX family. Homodimer. Probably interacts with PlsY.

Its subcellular location is the cytoplasm. The catalysed reaction is a fatty acyl-[ACP] + phosphate = an acyl phosphate + holo-[ACP]. Its pathway is lipid metabolism; phospholipid metabolism. Catalyzes the reversible formation of acyl-phosphate (acyl-PO(4)) from acyl-[acyl-carrier-protein] (acyl-ACP). This enzyme utilizes acyl-ACP as fatty acyl donor, but not acyl-CoA. The sequence is that of Phosphate acyltransferase from Latilactobacillus sakei subsp. sakei (strain 23K) (Lactobacillus sakei subsp. sakei).